The sequence spans 632 residues: tRNA uridine 5-carboxymethylaminomethyl modification enzyme MnmG (632 aa).

Residues 15 to 20 (GAGHAG), Ile127, and Ser182 each bind FAD. Residue 276 to 290 (GPRYCPSIEDKIVRF) coordinates NAD(+). Residue Gln373 participates in FAD binding.

It belongs to the MnmG family. In terms of assembly, homodimer. Heterotetramer of two MnmE and two MnmG subunits. FAD is required as a cofactor.

Its subcellular location is the cytoplasm. In terms of biological role, NAD-binding protein involved in the addition of a carboxymethylaminomethyl (cmnm) group at the wobble position (U34) of certain tRNAs, forming tRNA-cmnm(5)s(2)U34. This is tRNA uridine 5-carboxymethylaminomethyl modification enzyme MnmG from Streptococcus pyogenes serotype M12 (strain MGAS2096).